The chain runs to 198 residues: Recombination protein RecR (198 aa).

The segment at 58-73 adopts a C4-type zinc-finger fold; it reads CSVCGNFTDKDPCAIC. Residues 81–175 form the Toprim domain; the sequence is SIICVIEQPK…KVTRIAHGVP (95 aa).

It belongs to the RecR family.

In terms of biological role, may play a role in DNA repair. It seems to be involved in an RecBC-independent recombinational process of DNA repair. It may act with RecF and RecO. The sequence is that of Recombination protein RecR from Clostridium botulinum (strain ATCC 19397 / Type A).